Consider the following 200-residue polypeptide: dITP/XTP pyrophosphatase (200 aa).

Position 8–13 (8–13 (SQNSSK)) interacts with substrate. Residues Glu40 and Asp69 each coordinate Mg(2+). Asp69 functions as the Proton acceptor in the catalytic mechanism. Residues Ser70, 154–157 (FGYD), Lys177, and 182–183 (HR) contribute to the substrate site.

Belongs to the HAM1 NTPase family. As to quaternary structure, homodimer. Mg(2+) is required as a cofactor.

The enzyme catalyses XTP + H2O = XMP + diphosphate + H(+). It catalyses the reaction dITP + H2O = dIMP + diphosphate + H(+). The catalysed reaction is ITP + H2O = IMP + diphosphate + H(+). In terms of biological role, pyrophosphatase that catalyzes the hydrolysis of nucleoside triphosphates to their monophosphate derivatives, with a high preference for the non-canonical purine nucleotides XTP (xanthosine triphosphate), dITP (deoxyinosine triphosphate) and ITP. Seems to function as a house-cleaning enzyme that removes non-canonical purine nucleotides from the nucleotide pool, thus preventing their incorporation into DNA/RNA and avoiding chromosomal lesions. This is dITP/XTP pyrophosphatase from Coxiella burnetii (strain RSA 493 / Nine Mile phase I).